Reading from the N-terminus, the 111-residue chain is Phosphoribosyl-AMP cyclohydrolase (111 aa).

Asp80 serves as a coordination point for Mg(2+). Cys81 contributes to the Zn(2+) binding site. Mg(2+) contacts are provided by Asp82 and Asp84. Zn(2+) contacts are provided by Cys97 and Cys104.

Belongs to the PRA-CH family. As to quaternary structure, homodimer. Requires Mg(2+) as cofactor. Zn(2+) is required as a cofactor.

It is found in the cytoplasm. It catalyses the reaction 1-(5-phospho-beta-D-ribosyl)-5'-AMP + H2O = 1-(5-phospho-beta-D-ribosyl)-5-[(5-phospho-beta-D-ribosylamino)methylideneamino]imidazole-4-carboxamide. It participates in amino-acid biosynthesis; L-histidine biosynthesis; L-histidine from 5-phospho-alpha-D-ribose 1-diphosphate: step 3/9. Its function is as follows. Catalyzes the hydrolysis of the adenine ring of phosphoribosyl-AMP. In Mycobacterium marinum (strain ATCC BAA-535 / M), this protein is Phosphoribosyl-AMP cyclohydrolase.